A 155-amino-acid polypeptide reads, in one-letter code: uncharacterized protein (155 aa).

Disordered stretches follow at residues 1–22 (MSSQKGNVTRSRPQKHQNTFTF) and 108–155 (PFNK…DTQA). An N-acetylserine modification is found at S2. Phosphoserine occurs at positions 136, 144, and 146. The segment covering 136 to 155 (SDEDLDAESDSEGEDEDTQA) has biased composition (acidic residues).

This is an uncharacterized protein from Rattus norvegicus (Rat).